We begin with the raw amino-acid sequence, 204 residues long: Phosphoribosyl-dephospho-CoA transferase (204 aa).

Active-site residues include Asp129 and Asp131.

Belongs to the MdcG family.

It catalyses the reaction apo-[malonate decarboxylase ACP] + 2'-(5''-triphospho-alpha-D-ribosyl)-3'-dephospho-CoA = holo-[malonate decarboxylase ACP] + diphosphate. Its function is as follows. Transfers 2'-(5-triphosphoribosyl)-3'-dephosphocoenzyme-A to the apo-[acyl-carrier-protein] of the malonate decarboxylase to yield holo-[acyl-carrier-protein]. In Pseudomonas putida (strain GB-1), this protein is Phosphoribosyl-dephospho-CoA transferase.